The primary structure comprises 385 residues: Probable di-N-acetylchitobiase 2 (385 aa).

The signal sequence occupies residues 1 to 15; it reads MRIILLLFLIVFVVA. Residues 16–377 enclose the GH18 domain; the sequence is QSSSSSSSSG…DALASFFPQS (362 aa). 2 N-linked (GlcNAc...) asparagine glycosylation sites follow: N51 and N101. Residue E129 is the Proton donor of the active site. 3 N-linked (GlcNAc...) asparagine glycosylation sites follow: N223, N272, and N296.

Belongs to the glycosyl hydrolase 18 family.

Its subcellular location is the lysosome. In terms of biological role, involved in the degradation of asparagine-linked glycoproteins. May hydrolyze of N-acetyl-beta-D-glucosamine (1-4)N-acetylglucosamine chitobiose core from the reducing end of the bond. The sequence is that of Probable di-N-acetylchitobiase 2 (ctbs2) from Dictyostelium discoideum (Social amoeba).